We begin with the raw amino-acid sequence, 363 residues long: N-acetylmuramate/N-acetylglucosamine kinase (363 aa).

Belongs to the kinase AmgK family.

The enzyme catalyses N-acetyl-D-muramate + ATP = N-acetyl-alpha-D-muramate 1-phosphate + ADP + H(+). The catalysed reaction is N-acetyl-D-glucosamine + ATP = N-acetyl-alpha-D-glucosamine 1-phosphate + ADP + H(+). Its pathway is cell wall biogenesis; peptidoglycan recycling. In terms of biological role, sugar kinase that catalyzes the ATP-dependent phosphorylation of N-acetylmuramate (MurNAc) and N-acetylglucosamine (GlcNAc) at its C1 hydroxyl group, leading to MurNAc alpha-1P and GlcNAc alpha-1P, respectively. Is likely involved in peptidoglycan recycling as part of a cell wall recycling pathway that bypasses de novo biosynthesis of the peptidoglycan precursor UDP-MurNAc. Is able to complement the fosfomycin sensitivity phenotype of a P.putida mutant lacking amgK. The chain is N-acetylmuramate/N-acetylglucosamine kinase from Caulobacter vibrioides (strain ATCC 19089 / CIP 103742 / CB 15) (Caulobacter crescentus).